The primary structure comprises 150 residues: Deoxyuridine 5'-triphosphate nucleotidohydrolase (150 aa).

Substrate-binding positions include 69–71 (RSG), Asn-82, 86–88 (TID), and Lys-96.

This sequence belongs to the dUTPase family. Requires Mg(2+) as cofactor.

The enzyme catalyses dUTP + H2O = dUMP + diphosphate + H(+). It functions in the pathway pyrimidine metabolism; dUMP biosynthesis; dUMP from dCTP (dUTP route): step 2/2. Functionally, this enzyme is involved in nucleotide metabolism: it produces dUMP, the immediate precursor of thymidine nucleotides and it decreases the intracellular concentration of dUTP so that uracil cannot be incorporated into DNA. The chain is Deoxyuridine 5'-triphosphate nucleotidohydrolase from Aquifex aeolicus (strain VF5).